Reading from the N-terminus, the 547-residue chain is MFS-type transporter ltbE (547 aa).

The tract at residues 1-23 is disordered; it reads MEIAAETTGPAGVTTDVTNAEES. The next 13 helical transmembrane spans lie at 33–53, 74–94, 104–124, 135–155, 165–185, 195–215, 240–260, 267–287, 310–330, 343–363, 370–390, 399–419, and 432–452; these read QGWALASLTVAFMSICLVLAI, DIGWYGSSYLIAQMALLPTCG, WVYCLSLAIFELGSIIAAVAP, ISGLGAAGLVSGTTTILSYCV, PIVLGMYNIGSAMGPLIGGSI, FIFWINLPFGAVALVLVWFTL, ATLLLGATTCLNLALQWGGIV, KVFGCLIGFGLLLITFLCLQW, GFMMLVQVAIVVQSYFWPIYF, INLLPLIISNSLSTLCAGSLA, VPFMWVGPLILATGGGLYQLV, WIGFQILSGVGYGCCSQMPIL, and TGLVMIMFFQMLGGALAPSVG. A glycan (N-linked (GlcNAc...) asparagine) is linked at Asn-463. Residues 506–526 form a helical membrane-spanning segment; it reads VFWVGVATPALAWIASWAMEW.

The protein belongs to the major facilitator superfamily. TCR/Tet family.

It is found in the cell membrane. In terms of biological role, MFS-type transporter; part of the gene cluster that mediates the biosynthesis of luteodienoside A, a glycosylated polyketide consisting of an unusual 1-O-beta-D-glucopyranosyl-myo-inositol (glucinol) ester of 3-hydroxy-2,2,4-trimethylocta-4,6-dienoic acid. LtbE is probably involved in the secretion of luteodienoside A. This is MFS-type transporter ltbE from Aspergillus luteorubrus.